The following is a 274-amino-acid chain: Urease accessory protein UreD (274 aa).

This sequence belongs to the UreD family. In terms of assembly, ureD, UreF and UreG form a complex that acts as a GTP-hydrolysis-dependent molecular chaperone, activating the urease apoprotein by helping to assemble the nickel containing metallocenter of UreC. The UreE protein probably delivers the nickel.

The protein resides in the cytoplasm. Required for maturation of urease via the functional incorporation of the urease nickel metallocenter. This is Urease accessory protein UreD from Enterobacter sp. (strain 638).